We begin with the raw amino-acid sequence, 467 residues long: MADAKIAKLQSAVAELNQISENEKSGFISLVSRYLSGEAEQIEWSKIQTPTDEVVVPYDTLSPPPEDLEATKKLLDKLAVLKLNGGLGTTMGCTGPKSVIEVRNGFTFLDLIVIQIESLNKKYGCNVPLLLMNSFNTHDDTQKIVEKYANSNIEIHTFNQSQYPRLVMEDFQPLPSKGHAGKDGWYPPGHGDVFPSLMNSGKLDALLSQGKEYVFIANSDNLGAIVDIKILNHLINNQNEYCMEVTPKTLADVKGGTLISYEGRVQLLEIAQVPDAHVNEFKSIEKFKIFNTNNLWVNLKAIKRLVEADALKMEIIPNPKEVDGVKVLQLETAAGAAIRFFDHAIGINVPRSRFLPVKATSDLLLVQSDLYMLVDGFVIRNKARTNPSNPSIELGPEFKKVANFLSRFKSIPSIVELDSLKVSGDVWFGEGVVLKGNVSIAAKSGVKLEISDGAVLENKVINGPEDI.

Residues 83 to 86 (LNGG), Lys-97, Gln-160, and Gly-189 each bind UTP. 85–86 (GG) contacts substrate. Residues His-190 and 218-220 (NSD) each bind substrate. Asp-220 and Lys-358 together coordinate UTP.

This sequence belongs to the UDPGP type 1 family.

The protein resides in the cytoplasm. The catalysed reaction is alpha-D-glucose 1-phosphate + UTP + H(+) = UDP-alpha-D-glucose + diphosphate. Functionally, plays a central role as a glucosyl donor in cellular metabolic pathways. This is UTP--glucose-1-phosphate uridylyltransferase (UGPA) from Musa acuminata (Banana).